Here is a 372-residue protein sequence, read N- to C-terminus: Alginate lyase (372 aa).

A signal peptide spans 1 to 22; it reads MKTRLALPCLLGSLLLSSAVHA. Substrate-binding positions include 61-62, 134-135, and Tyr-252; these read SK and HT.

Belongs to the polysaccharide lyase 5 family.

It localises to the periplasm. It catalyses the reaction Eliminative cleavage of alginate to give oligosaccharides with 4-deoxy-alpha-L-erythro-hex-4-enuronosyl groups at their non-reducing ends and beta-D-mannuronate at their reducing end.. With respect to regulation, monovalent cations such as potassium and sodium enhance activity, as well as a combined action of these cations with magnesium. However, other cations like calcium, cobalt, manganese and zinc, or the presence of EDTA, do not affect the enzymatic activity. Functionally, catalyzes the depolymerization of alginate by cleaving the beta-1,4 glycosidic bond between two adjacent sugar residues via a beta-elimination mechanism. Degrades deacetylated polymannuronate alginate more efficiently than non-deacetylated polyM. Is able to degrade its own alginate, but at a lower efficiency than that produced from M.pyriferia and P.aeruginosa. May serve to degrade mislocalized alginate that is trapped in the periplasmic space. This Azotobacter chroococcum mcd 1 protein is Alginate lyase.